A 536-amino-acid polypeptide reads, in one-letter code: CTP synthase (536 aa).

The amidoligase domain stretch occupies residues 1-266 (MKTKFIFVTG…DEQVVEKLNI (266 aa)). Serine 14 serves as a coordination point for CTP. UTP is bound at residue serine 14. ATP contacts are provided by residues 15–20 (SIGKGL) and aspartate 72. 2 residues coordinate Mg(2+): aspartate 72 and glutamate 140. CTP-binding positions include 147–149 (DIE), 187–192 (KTKPTQ), and lysine 223. Residues 187–192 (KTKPTQ) and lysine 223 contribute to the UTP site. The region spanning 292-534 (RIAIVGKYVN…IAAALDRKDK (243 aa)) is the Glutamine amidotransferase type-1 domain. Glycine 354 serves as a coordination point for L-glutamine. Cysteine 381 serves as the catalytic Nucleophile; for glutamine hydrolysis. L-glutamine is bound by residues 382-385 (LGMQ), glutamate 405, and arginine 462. Catalysis depends on residues histidine 507 and glutamate 509.

Belongs to the CTP synthase family. In terms of assembly, homotetramer.

The catalysed reaction is UTP + L-glutamine + ATP + H2O = CTP + L-glutamate + ADP + phosphate + 2 H(+). It carries out the reaction L-glutamine + H2O = L-glutamate + NH4(+). It catalyses the reaction UTP + NH4(+) + ATP = CTP + ADP + phosphate + 2 H(+). Its pathway is pyrimidine metabolism; CTP biosynthesis via de novo pathway; CTP from UDP: step 2/2. Allosterically activated by GTP, when glutamine is the substrate; GTP has no effect on the reaction when ammonia is the substrate. The allosteric effector GTP functions by stabilizing the protein conformation that binds the tetrahedral intermediate(s) formed during glutamine hydrolysis. Inhibited by the product CTP, via allosteric rather than competitive inhibition. Functionally, catalyzes the ATP-dependent amination of UTP to CTP with either L-glutamine or ammonia as the source of nitrogen. Regulates intracellular CTP levels through interactions with the four ribonucleotide triphosphates. The chain is CTP synthase from Geobacter sulfurreducens (strain ATCC 51573 / DSM 12127 / PCA).